The primary structure comprises 135 residues: CDGSH iron-sulfur domain-containing protein 2A (135 aa).

The Lumenal segment spans residues 1 to 37 (MVLETISRIIKIQLPAYLKKLPLPETIGGFARLTVSD). The helical transmembrane segment at 38–60 (WLRLLPLLGILALLGYLTIRPFL) threads the bilayer. Residues 61–135 (PKKKKQKDSL…GPLILKKKIL (75 aa)) lie on the Cytoplasmic side of the membrane. [2Fe-2S] cluster is bound by residues C99, C101, C110, and H114.

This sequence belongs to the CISD protein family. CISD2 subfamily. Homodimer. [2Fe-2S] cluster serves as cofactor.

It is found in the endoplasmic reticulum membrane. It localises to the mitochondrion outer membrane. In terms of biological role, regulator of autophagy that contributes to antagonize becn1-mediated cellular autophagy at the endoplasmic reticulum. Participates in the interaction of bcl2 with becn1 and is required for bcl2-mediated depression of endoplasmic reticulum Ca(2+) stores during autophagy. The polypeptide is CDGSH iron-sulfur domain-containing protein 2A (cisd2a) (Oncorhynchus mykiss (Rainbow trout)).